We begin with the raw amino-acid sequence, 414 residues long: Multidrug resistance protein MdtG (414 aa).

10 consecutive transmembrane segments (helical) span residues 14-34, 56-76, 89-109, 113-133, 144-164, 171-191, 219-239, 254-274, 288-308, and 376-396; these read LFVTWLGCFLTGAAFSLIMPF, LVFSITFLFSAIAAPFWGSLA, ALGMGIVMVLMGMAQNIWQFL, ALLGLLGGFIPNANALIATQV, TLSTGGVSGALIGPLIGGLLA, PVFFITAAVLFACFVMTWFYV, ILSLFVTTMIIQIATGSIAPI, LAFVSGMIASVPGVAALISAP, ILIAMLALSVLILIPMAFVQT, and AVFCVTAVVVLFNALYSYWCL.

The protein belongs to the major facilitator superfamily. DHA1 family. MdtG (TC 2.A.1.2.20) subfamily.

It localises to the cell inner membrane. This is Multidrug resistance protein MdtG from Yersinia enterocolitica serotype O:8 / biotype 1B (strain NCTC 13174 / 8081).